We begin with the raw amino-acid sequence, 279 residues long: Movement protein (279 aa).

This sequence belongs to the cucumovirus movement protein family.

The protein localises to the host cell junction. It localises to the host plasmodesma. Functionally, transports viral genome to neighboring plant cells directly through plasmosdesmata, without any budding. The movement protein allows efficient cell to cell propagation, by bypassing the host cell wall barrier. Acts by forming a tubular structure at the host plasmodesmata, enlarging it enough to allow free passage of virion capsids. In Cucumber mosaic virus (strain M) (CMV), this protein is Movement protein.